The chain runs to 256 residues: uncharacterized protein (256 aa).

The signal sequence occupies residues 1–22 (MGYLKRIGMCISLLIVIIFVTS). C23 carries N-palmitoyl cysteine lipidation. C23 carries the S-diacylglycerol cysteine lipid modification.

Belongs to the staphylococcal tandem lipoprotein family.

The protein resides in the cell membrane. This is an uncharacterized protein from Staphylococcus aureus (strain MSSA476).